The sequence spans 91 residues: MHNIPPEESLIEYPSDFPIKVMGKQHPEFAQTLTEVVLQFDPGFDPASVEMRPSKGGNYLGLTFTVRATSREQLDSLYRALHGHPMVSIVL.

Belongs to the UPF0250 family.

The protein is UPF0250 protein BP0104 of Bordetella pertussis (strain Tohama I / ATCC BAA-589 / NCTC 13251).